Reading from the N-terminus, the 242-residue chain is Arginine transport ATP-binding protein ArtP (242 aa).

One can recognise an ABC transporter domain in the interval 3–241 (IQLNGINCFY…QTEAFKNYLS (239 aa)). 35–42 (GPSGAGKS) contacts ATP.

It belongs to the ABC transporter superfamily. As to quaternary structure, the complex is composed of two ATP-binding proteins (ArtP), two transmembrane proteins (ArtM and ArtQ) and two solute-binding proteins (ArtJ and ArtI).

Its subcellular location is the cell inner membrane. The catalysed reaction is a polar amino acid(out) + ATP + H2O = a polar amino acid(in) + ADP + phosphate + H(+). The enzyme catalyses L-arginine(out) + ATP + H2O = L-arginine(in) + ADP + phosphate + H(+). Functionally, part of the ABC transporter complex ArtPIQMJ involved in arginine transport. Probably responsible for energy coupling to the transport system. The chain is Arginine transport ATP-binding protein ArtP (artP) from Escherichia coli O157:H7.